Here is a 202-residue protein sequence, read N- to C-terminus: Venom allergen 5.02 (202 aa).

4 disulfide bridges follow: Cys-4–Cys-16, Cys-8–Cys-101, Cys-26–Cys-94, and Cys-168–Cys-185. Positions 46–187 constitute an SCP domain; that stretch reads KQHNEFRQKV…WHRHYLVCNY (142 aa).

This sequence belongs to the CRISP family. Venom allergen 5-like subfamily. Expressed by the venom gland.

The protein localises to the secreted. This is Venom allergen 5.02 from Vespa crabro (European hornet).